Consider the following 152-residue polypeptide: MTAPRLISKYRIQIHRISENMVLNNDGLKEISTLLVSASDREPEVKLEKTKDNSSSDITTPPAEFIPSIFFSLHKIRKDPNNVSSQLETSTGFIRHRIKRCKALLQENEEVRNLLANSIEEWENIIADKEQQLRVKAKVLRDLDARIEKITN.

Residues 98-150 (IKRCKALLQENEEVRNLLANSIEEWENIIADKEQQLRVKAKVLRDLDARIEKI) are a coiled coil.

Belongs to the Mediator complex subunit 9 family. As to quaternary structure, component of the Mediator complex.

It localises to the nucleus. Its function is as follows. Component of the Mediator complex, a coactivator involved in the regulated transcription of nearly all RNA polymerase II-dependent genes. Mediator functions as a bridge to convey information from gene-specific regulatory proteins to the basal RNA polymerase II transcription machinery. Mediator is recruited to promoters by direct interactions with regulatory proteins and serves as a scaffold for the assembly of a functional preinitiation complex with RNA polymerase II and the general transcription factors. In Candida glabrata (strain ATCC 2001 / BCRC 20586 / JCM 3761 / NBRC 0622 / NRRL Y-65 / CBS 138) (Yeast), this protein is Mediator of RNA polymerase II transcription subunit 9 (CSE2).